Here is a 186-residue protein sequence, read N- to C-terminus: Tumor necrosis factor alpha-induced protein 8-like protein 1 (186 aa).

It belongs to the TNFAIP8 family.

It is found in the cytoplasm. This chain is Tumor necrosis factor alpha-induced protein 8-like protein 1 (TNFAIP8L1), found in Gallus gallus (Chicken).